The sequence spans 502 residues: 9-beta-pimara-7,15-diene oxidase (502 aa).

The next 2 helical transmembrane spans lie at 4–26 and 106–128; these read INSEATVTLVSVVTLPILLALLT and LLVSEIFCYGNLDIGFAPYGAYW. Heme is bound at residue C438.

The protein belongs to the cytochrome P450 family. Heme is required as a cofactor.

It localises to the membrane. It catalyses the reaction 9beta-pimara-7,15-diene + 3 reduced [NADPH--hemoprotein reductase] + 3 O2 = 9beta-pimara-7,15-dien-19-oate + 3 oxidized [NADPH--hemoprotein reductase] + 4 H2O + 4 H(+). Its function is as follows. Involved in momilactone phytoalexins biosynthesis; acts as a multifunctional diterpene oxidase. Participates in the biosynthetic steps between 9-beta-pimara-7,15-diene and 3-beta-hydroxy-9-beta-pimara-7,15-dien-19,6-beta-olide. Also catalyzes consecutive oxidations at C19 of syn-stemod-13(17)-ene. This is 9-beta-pimara-7,15-diene oxidase (CYP99A3) from Oryza sativa subsp. japonica (Rice).